A 53-amino-acid chain; its full sequence is MVRKKANHSRPGMNAAKAQGKDAGLTSQFHAEIGQEPLNQAQRQNNKKRKKNQ.

Residues M1–Q53 form a disordered region.

The protein belongs to the SspO family.

Its subcellular location is the spore core. This is Small, acid-soluble spore protein O from Halalkalibacterium halodurans (strain ATCC BAA-125 / DSM 18197 / FERM 7344 / JCM 9153 / C-125) (Bacillus halodurans).